The chain runs to 72 residues: Translation initiation factor IF-1 (72 aa).

One can recognise an S1-like domain in the interval 1 to 72 (MAKEELLEFP…TKGRITYRFK (72 aa)).

It belongs to the IF-1 family. As to quaternary structure, component of the 30S ribosomal translation pre-initiation complex which assembles on the 30S ribosome in the order IF-2 and IF-3, IF-1 and N-formylmethionyl-tRNA(fMet); mRNA recruitment can occur at any time during PIC assembly.

It is found in the cytoplasm. One of the essential components for the initiation of protein synthesis. Stabilizes the binding of IF-2 and IF-3 on the 30S subunit to which N-formylmethionyl-tRNA(fMet) subsequently binds. Helps modulate mRNA selection, yielding the 30S pre-initiation complex (PIC). Upon addition of the 50S ribosomal subunit IF-1, IF-2 and IF-3 are released leaving the mature 70S translation initiation complex. This chain is Translation initiation factor IF-1, found in Caulobacter vibrioides (strain ATCC 19089 / CIP 103742 / CB 15) (Caulobacter crescentus).